The following is a 149-amino-acid chain: Pleckstrin homology domain-containing family J member 1 (149 aa).

One can recognise a PH domain in the interval 15–108; that stretch reads RAEKAAELGM…WVEALTNASY (94 aa).

The chain is Pleckstrin homology domain-containing family J member 1 (plekhj1) from Xenopus laevis (African clawed frog).